Consider the following 458-residue polypeptide: Exodeoxyribonuclease 7 large subunit (458 aa).

The protein belongs to the XseA family. Heterooligomer composed of large and small subunits.

The protein resides in the cytoplasm. The enzyme catalyses Exonucleolytic cleavage in either 5'- to 3'- or 3'- to 5'-direction to yield nucleoside 5'-phosphates.. In terms of biological role, bidirectionally degrades single-stranded DNA into large acid-insoluble oligonucleotides, which are then degraded further into small acid-soluble oligonucleotides. In Escherichia coli (strain UTI89 / UPEC), this protein is Exodeoxyribonuclease 7 large subunit.